The sequence spans 416 residues: L-cysteine:1D-myo-inositol 2-amino-2-deoxy-alpha-D-glucopyranoside ligase (416 aa).

Zn(2+) is bound at residue C45. L-cysteinyl-5'-AMP-binding positions include 45 to 48 (CGIT), T60, and 83 to 85 (NVT). A 'HIGH' region motif is present at residues 47 to 57 (ITPYDSTHLGH). The 'ERGGDP' region signature appears at 191–196 (ERGGDP). Position 232 (W232) interacts with L-cysteinyl-5'-AMP. C236 contacts Zn(2+). 254–256 (GSD) contacts L-cysteinyl-5'-AMP. H261 contacts Zn(2+). An L-cysteinyl-5'-AMP-binding site is contributed by V286. The short motif at 292–296 (KMSKS) is the 'KMSKS' region element.

It belongs to the class-I aminoacyl-tRNA synthetase family. MshC subfamily. Monomer. Zn(2+) is required as a cofactor.

The enzyme catalyses 1D-myo-inositol 2-amino-2-deoxy-alpha-D-glucopyranoside + L-cysteine + ATP = 1D-myo-inositol 2-(L-cysteinylamino)-2-deoxy-alpha-D-glucopyranoside + AMP + diphosphate + H(+). Functionally, catalyzes the ATP-dependent condensation of GlcN-Ins and L-cysteine to form L-Cys-GlcN-Ins. The chain is L-cysteine:1D-myo-inositol 2-amino-2-deoxy-alpha-D-glucopyranoside ligase from Brachybacterium faecium (strain ATCC 43885 / DSM 4810 / JCM 11609 / LMG 19847 / NBRC 14762 / NCIMB 9860 / 6-10).